Here is a 299-residue protein sequence, read N- to C-terminus: ATP phosphoribosyltransferase (299 aa).

The protein belongs to the ATP phosphoribosyltransferase family. Long subfamily. Requires Mg(2+) as cofactor.

Its subcellular location is the cytoplasm. The catalysed reaction is 1-(5-phospho-beta-D-ribosyl)-ATP + diphosphate = 5-phospho-alpha-D-ribose 1-diphosphate + ATP. It functions in the pathway amino-acid biosynthesis; L-histidine biosynthesis; L-histidine from 5-phospho-alpha-D-ribose 1-diphosphate: step 1/9. Its activity is regulated as follows. Feedback inhibited by histidine. In terms of biological role, catalyzes the condensation of ATP and 5-phosphoribose 1-diphosphate to form N'-(5'-phosphoribosyl)-ATP (PR-ATP). Has a crucial role in the pathway because the rate of histidine biosynthesis seems to be controlled primarily by regulation of HisG enzymatic activity. This Shewanella sp. (strain MR-7) protein is ATP phosphoribosyltransferase.